The primary structure comprises 258 residues: Imidazole glycerol phosphate synthase subunit HisF (258 aa).

Catalysis depends on residues Asp11 and Asp130.

The protein belongs to the HisA/HisF family. Heterodimer of HisH and HisF.

The protein resides in the cytoplasm. The catalysed reaction is 5-[(5-phospho-1-deoxy-D-ribulos-1-ylimino)methylamino]-1-(5-phospho-beta-D-ribosyl)imidazole-4-carboxamide + L-glutamine = D-erythro-1-(imidazol-4-yl)glycerol 3-phosphate + 5-amino-1-(5-phospho-beta-D-ribosyl)imidazole-4-carboxamide + L-glutamate + H(+). Its pathway is amino-acid biosynthesis; L-histidine biosynthesis; L-histidine from 5-phospho-alpha-D-ribose 1-diphosphate: step 5/9. In terms of biological role, IGPS catalyzes the conversion of PRFAR and glutamine to IGP, AICAR and glutamate. The HisF subunit catalyzes the cyclization activity that produces IGP and AICAR from PRFAR using the ammonia provided by the HisH subunit. In Haemophilus influenzae (strain PittEE), this protein is Imidazole glycerol phosphate synthase subunit HisF.